A 423-amino-acid chain; its full sequence is p-aminobenzoyl-glutamate hydrolase subunit A homolog (423 aa).

This sequence belongs to the peptidase M20 family. It depends on Mn(2+) as a cofactor.

Catalyzes the cleavage of p-aminobenzoyl-glutamate (PABA-GLU) to form p-aminobenzoate (PABA) and glutamate. This is p-aminobenzoyl-glutamate hydrolase subunit A homolog (abgA) from Haemophilus influenzae (strain ATCC 51907 / DSM 11121 / KW20 / Rd).